Reading from the N-terminus, the 120-residue chain is Immunoglobulin lambda variable 4-60 (120 aa).

The first 21 residues, 1–21 (MAWTPLLLLFPLLLHCTGSLS), serve as a signal peptide directing secretion. Residues 22–46 (QPVLTQSSSASASLGSSVKLTCTLS) form a framework-1 region. In terms of domain architecture, Ig-like spans 23–120 (PVLTQSSSAS…YYCETWDSNT (98 aa)). An intrachain disulfide couples Cys-43 to Cys-113. The complementarity-determining-1 stretch occupies residues 47–53 (SGHSSYI). Positions 54 to 70 (IAWHQQQPGKAPRYLMK) are framework-2. The segment at 71-77 (LEGSGSY) is complementarity-determining-2. The segment at 78 to 113 (NKGSGVPDRFSGSSSGADRYLTISNLQFEDEADYYC) is framework-3. The tract at residues 114–120 (ETWDSNT) is complementarity-determining-3.

As to quaternary structure, immunoglobulins are composed of two identical heavy chains and two identical light chains; disulfide-linked.

It is found in the secreted. The protein resides in the cell membrane. In terms of biological role, v region of the variable domain of immunoglobulin light chains that participates in the antigen recognition. Immunoglobulins, also known as antibodies, are membrane-bound or secreted glycoproteins produced by B lymphocytes. In the recognition phase of humoral immunity, the membrane-bound immunoglobulins serve as receptors which, upon binding of a specific antigen, trigger the clonal expansion and differentiation of B lymphocytes into immunoglobulins-secreting plasma cells. Secreted immunoglobulins mediate the effector phase of humoral immunity, which results in the elimination of bound antigens. The antigen binding site is formed by the variable domain of one heavy chain, together with that of its associated light chain. Thus, each immunoglobulin has two antigen binding sites with remarkable affinity for a particular antigen. The variable domains are assembled by a process called V-(D)-J rearrangement and can then be subjected to somatic hypermutations which, after exposure to antigen and selection, allow affinity maturation for a particular antigen. This is Immunoglobulin lambda variable 4-60 from Homo sapiens (Human).